We begin with the raw amino-acid sequence, 821 residues long: Elongator complex protein 2 (821 aa).

WD repeat units lie at residues cysteine 14–asparagine 53, lysine 54–cysteine 98, glycine 103–leucine 145, glycine 151–valine 193, glycine 198–proline 239, glycine 271–valine 319, glycine 329–proline 368, glycine 374–glutamine 413, isoleucine 424–phenylalanine 462, cysteine 602–glutamate 641, valine 656–glycine 695, alanine 715–serine 754, and glycine 769–leucine 821.

It belongs to the WD repeat ELP2 family. As to quaternary structure, component of the elongator complex.

The protein localises to the cytoplasm. The protein resides in the nucleus. It functions in the pathway tRNA modification; 5-methoxycarbonylmethyl-2-thiouridine-tRNA biosynthesis. In terms of biological role, component of the elongator complex which is required for multiple tRNA modifications, including mcm5U (5-methoxycarbonylmethyl uridine), mcm5s2U (5-methoxycarbonylmethyl-2-thiouridine), and ncm5U (5-carbamoylmethyl uridine). The elongator complex catalyzes the formation of carboxymethyluridine in the wobble base at position 34 in tRNAs. The chain is Elongator complex protein 2 (elp2) from Danio rerio (Zebrafish).